The following is a 566-amino-acid chain: Membrane protein insertase YidC (566 aa).

Transmembrane regions (helical) follow at residues isoleucine 3–tryptophan 23, glycine 346–valine 366, tryptophan 369–alanine 389, glycine 436–isoleucine 456, and methionine 509–leucine 529.

Belongs to the OXA1/ALB3/YidC family. Type 1 subfamily. As to quaternary structure, interacts with the Sec translocase complex via SecD. Specifically interacts with transmembrane segments of nascent integral membrane proteins during membrane integration.

Its subcellular location is the cell inner membrane. Required for the insertion and/or proper folding and/or complex formation of integral membrane proteins into the membrane. Involved in integration of membrane proteins that insert both dependently and independently of the Sec translocase complex, as well as at least some lipoproteins. Aids folding of multispanning membrane proteins. The chain is Membrane protein insertase YidC from Coxiella burnetii (strain CbuK_Q154) (Coxiella burnetii (strain Q154)).